Reading from the N-terminus, the 1489-residue chain is Sex-determining transformer protein 2 (1489 aa).

A signal peptide spans 1-33; it reads MKLAFNKLLVASVVFTVLSFGLLLASLFTTTAT. A run of 11 helical transmembrane segments spans residues 454–474, 489–509, 513–533, 600–620, 622–642, 749–769, 931–951, 958–978, 986–1006, 1041–1061, and 1066–1086; these read MIYF…AFAF, GFIT…ILID, LCYI…VTFI, YWFL…FFID, DVQK…FEEM, AVVV…LLFI, IFAA…FSIG, LAFA…VSLF, YTNV…CDLA, VQIF…TAII, and AFFI…FNSL. The interaction with fem-3 stretch occupies residues 1138–1288; it reads EFSIRPTENT…EQQEVTDDVA (151 aa). 3 disordered regions span residues 1143–1176, 1233–1393, and 1412–1489; these read PTEN…DPSM, LLRQ…YPPS, and RNLP…TPGL. Basic and acidic residues-rich tracts occupy residues 1275 to 1298, 1326 to 1340, and 1423 to 1433; these read DPAK…EVRK, VSRE…REPR, and RPRDWDQRRLV. An MX regulatory domain; required for tra-1 binding region spans residues 1402–1423; sequence CEDVYWKYNERNLPDNVPMPPR. Pro residues predominate over residues 1444 to 1456; the sequence is VPPPGRSAIPIPP. Residues 1460–1482 show a composition bias toward basic and acidic residues; sequence RLRERRREQHLREQEARRNRPES.

Interacts with tra-1 and fem-3.

It is found in the membrane. In terms of biological role, plays a major role in controlling sexual cell fates. Promotes female development in XX animals where it sequesters one or more of the FEM proteins to the membrane thereby freeing the tra-1 protein (a putative transcription factor) to enter the nucleus and promote female development. In XO animals it acts as a receptor for her-1 which prevents it from binding to FEM proteins thereby repressing the activity of tra-1. Negatively regulates male development when bound to fem-3 and is required together with tra-1 for promoting spermatogenesis. Also required for feminizing tra-3 activity. This is Sex-determining transformer protein 2 from Caenorhabditis briggsae.